We begin with the raw amino-acid sequence, 621 residues long: MDWEKLGLKMGLEIHQQLNTKHKLFCPCKTELVDEDYNEIVERNLRPTQSELGEIDRAALQESLRGLNFKYESYDHHTCLVESDDEPPHSLNKEALEICITIAALMNMHIVDEFHTMRKQVIDGSNTGGFQRTGLAATDGYLDTPYGRVAIESLGLEEDAARRIETTEDYTEFRLDRLGIPLAEITTDPSMHHPDQVREVAYMIGQVLRSTNVKRGLGTIRQDLNISIEKGARVEIKGVQNLDLMSEIVENEVQRQLALIEIKEELNKRNAEVLEEIHDLDSLFENTKSKILSSAESIKAVVLKGFNGLIGKEVQPGRRFGTEIASYAKKRGVSGIFHSDELPAYGITQDEVNSVKDYLNVGSQDAFIIVAHDENVAISALEEVKRRANLGFEGVVEETRKSLDDGNTEYMRPLPTANRMYLETDIPLFKITDELVEPIKNNLPELPDVKKERIIKEYNLSEDLASQLVKRLEADVFEEILTDVEVDPTPVASLLAYDLREIKREGLDIDILTTRHLKDIFQLLADSKIAKDSVTKLTTCVIQSPDEEIEITAKNNNLTLLSHEEVTQIIEDIVNKNEAMVKERQMGAMGPLMGMSMKELKGKADGSIVNRIVKESIQKML.

This sequence belongs to the GatB/GatE family. GatE subfamily. As to quaternary structure, heterodimer of GatD and GatE.

The catalysed reaction is L-glutamyl-tRNA(Gln) + L-glutamine + ATP + H2O = L-glutaminyl-tRNA(Gln) + L-glutamate + ADP + phosphate + H(+). Allows the formation of correctly charged Gln-tRNA(Gln) through the transamidation of misacylated Glu-tRNA(Gln) in organisms which lack glutaminyl-tRNA synthetase. The reaction takes place in the presence of glutamine and ATP through an activated gamma-phospho-Glu-tRNA(Gln). The GatDE system is specific for glutamate and does not act on aspartate. In Methanobrevibacter smithii (strain ATCC 35061 / DSM 861 / OCM 144 / PS), this protein is Glutamyl-tRNA(Gln) amidotransferase subunit E.